Reading from the N-terminus, the 526-residue chain is Probable feruloyl esterase B-2 (526 aa).

Residues 1 to 19 (MPSLRRLLPFLAAGSAALA) form the signal peptide. 2 disulfide bridges follow: Cys28/Cys75 and Cys63/Cys114. Residues Asn53, Asn85, Asn98, and Asn138 are each glycosylated (N-linked (GlcNAc...) asparagine). 3 disulfide bridges follow: Cys187–Cys441, Cys256–Cys273, and Cys282–Cys291. Ser188 acts as the Acyl-ester intermediate in catalysis. The N-linked (GlcNAc...) asparagine glycan is linked to Asn246. Ca(2+) is bound by residues Asp257, Asp260, Ala262, Asp264, and Ile266. N-linked (GlcNAc...) asparagine glycans are attached at residues Asn287 and Asn311. Residues Asp400 and His440 each act as charge relay system in the active site. N-linked (GlcNAc...) asparagine glycans are attached at residues Asn490 and Asn516. A disulfide bond links Cys503 and Cys525.

The protein belongs to the tannase family.

The protein resides in the secreted. It catalyses the reaction feruloyl-polysaccharide + H2O = ferulate + polysaccharide.. Involved in degradation of plant cell walls. Hydrolyzes the feruloyl-arabinose ester bond in arabinoxylans as well as the feruloyl-galactose and feruloyl-arabinose ester bonds in pectin. The polypeptide is Probable feruloyl esterase B-2 (faeB-2) (Aspergillus oryzae (strain ATCC 42149 / RIB 40) (Yellow koji mold)).